The following is a 348-amino-acid chain: Small ribosomal subunit biogenesis GTPase RsgA (348 aa).

A disordered region spans residues 1-32; it reads MAKQKLTQNQKRRIHSNNAKALDRHRRQTKKQ. The region spanning 106–274 is the CP-type G domain; sequence KNELSRPDYY…LIDSPGIREF (169 aa). GTP is bound by residues 162–165 and 216–224; these read NKID and GQSGVGKSS. Zn(2+) contacts are provided by C298, C303, H305, and C311.

This sequence belongs to the TRAFAC class YlqF/YawG GTPase family. RsgA subfamily. Monomer. Associates with 30S ribosomal subunit, binds 16S rRNA. Zn(2+) is required as a cofactor.

The protein resides in the cytoplasm. In terms of biological role, one of several proteins that assist in the late maturation steps of the functional core of the 30S ribosomal subunit. Helps release RbfA from mature subunits. May play a role in the assembly of ribosomal proteins into the subunit. Circularly permuted GTPase that catalyzes slow GTP hydrolysis, GTPase activity is stimulated by the 30S ribosomal subunit. The polypeptide is Small ribosomal subunit biogenesis GTPase RsgA (Actinobacillus succinogenes (strain ATCC 55618 / DSM 22257 / CCUG 43843 / 130Z)).